Consider the following 187-residue polypeptide: Putative manganese efflux pump MntP (187 aa).

Helical transmembrane passes span 3 to 23 (FYSLIFLSCALGMDAFAVSLC), 35 to 55 (HYLIVGIYFGGFQALMPTIGY), 56 to 76 (FIGITFASFIASIDHWIAFIL), 107 to 127 (LALAIATSIDALAVGVSFAFL), 129 to 149 (VNLLLAIFLIGIITFILCIIA), and 166 to 186 (LLGGLVLIILGVKILIEHLFF).

It belongs to the MntP (TC 9.B.29) family.

The protein resides in the cell inner membrane. In terms of biological role, probably functions as a manganese efflux pump. The protein is Putative manganese efflux pump MntP of Campylobacter jejuni (strain RM1221).